The primary structure comprises 298 residues: Quinolinate synthase (298 aa).

2 residues coordinate iminosuccinate: His19 and Ser36. Cys81 serves as a coordination point for [4Fe-4S] cluster. Iminosuccinate contacts are provided by residues 107–109 (YVN) and Ser124. Residue Cys168 coordinates [4Fe-4S] cluster. Residues 193–195 (HPE) and Thr210 contribute to the iminosuccinate site. Residue Cys254 participates in [4Fe-4S] cluster binding.

This sequence belongs to the quinolinate synthase family. Type 2 subfamily. [4Fe-4S] cluster serves as cofactor.

It is found in the cytoplasm. The catalysed reaction is iminosuccinate + dihydroxyacetone phosphate = quinolinate + phosphate + 2 H2O + H(+). The protein operates within cofactor biosynthesis; NAD(+) biosynthesis; quinolinate from iminoaspartate: step 1/1. Functionally, catalyzes the condensation of iminoaspartate with dihydroxyacetone phosphate to form quinolinate. The sequence is that of Quinolinate synthase from Thermotoga petrophila (strain ATCC BAA-488 / DSM 13995 / JCM 10881 / RKU-1).